A 314-amino-acid polypeptide reads, in one-letter code: Calcium homeostasis modulator protein 4 (314 aa).

At 1–14 (MCPTLNNIVSSLQR) the chain is on the cytoplasmic side. Residues 15-37 (NGIFINSLIAALTIGGQQLFSSS) form a helical membrane-spanning segment. The Extracellular portion of the chain corresponds to 38-48 (TFSCPCQVGKN). Disulfide bonds link Cys41/Cys131 and Cys43/Cys162. A helical transmembrane segment spans residues 49-71 (FYYGSAFLVIPALILLVAGFALR). The Cytoplasmic portion of the chain corresponds to 72-103 (SQMWTITGEYCCSCAPPYRRISPLECKLACLR). Residues 104–129 (FFSITGRAVIAPLTWLAVTLLTGTYY) form a helical membrane-spanning segment. Over 130–183 (ECAASEFASVDHYPMFDNVSASKREEILAGFPCCRSAPSDVILVRDEIALLHRY) the chain is Extracellular. A helical membrane pass occupies residues 184 to 207 (QSQMLGWILITLATIAALVSCCVA). Topologically, residues 208-314 (KCCSPLTSLQ…DRSRGIELKP (107 aa)) are cytoplasmic.

This sequence belongs to the CALHM family. As to quaternary structure, oligomerizes to form decameric and undecameric channels. Two hemichannels can assemble in a tail-to-tail manner to form a gap junction. Placenta.

It localises to the cell membrane. In terms of biological role, may assemble to form gap junction channel-like structures involved in intercellular communication. Channel gating and ion conductance are likely regulated by membrane lipids rather than by membrane depolarization or extracellular calcium levels. The sequence is that of Calcium homeostasis modulator protein 4 from Homo sapiens (Human).